The sequence spans 332 residues: Acetyl-coenzyme A carboxylase carboxyl transferase subunit alpha (332 aa).

Residues 44 to 298 form the CoA carboxyltransferase C-terminal domain; the sequence is QLESRAQNLR…KETLVNNLEE (255 aa).

Belongs to the AccA family. In terms of assembly, acetyl-CoA carboxylase is a heterohexamer composed of biotin carboxyl carrier protein (AccB), biotin carboxylase (AccC) and two subunits each of ACCase subunit alpha (AccA) and ACCase subunit beta (AccD).

It localises to the cytoplasm. It catalyses the reaction N(6)-carboxybiotinyl-L-lysyl-[protein] + acetyl-CoA = N(6)-biotinyl-L-lysyl-[protein] + malonyl-CoA. It participates in lipid metabolism; malonyl-CoA biosynthesis; malonyl-CoA from acetyl-CoA: step 1/1. Functionally, component of the acetyl coenzyme A carboxylase (ACC) complex. First, biotin carboxylase catalyzes the carboxylation of biotin on its carrier protein (BCCP) and then the CO(2) group is transferred by the carboxyltransferase to acetyl-CoA to form malonyl-CoA. The polypeptide is Acetyl-coenzyme A carboxylase carboxyl transferase subunit alpha (Crocosphaera subtropica (strain ATCC 51142 / BH68) (Cyanothece sp. (strain ATCC 51142))).